The sequence spans 804 residues: Phenylalanine--tRNA ligase beta subunit (804 aa).

One can recognise a tRNA-binding domain in the interval 40–155; it reads GEGIKGVVIG…GDAETGADAL (116 aa). The region spanning 409 to 484 is the B5 domain; that stretch reads IKENVIRLSV…RLYGYDNIPS (76 aa). Mg(2+) is bound by residues aspartate 462, aspartate 468, glutamate 471, and glutamate 472. Positions 710–803 constitute an FDX-ACB domain; sequence PKYPSVTRDI…LEDKYQAVLR (94 aa).

This sequence belongs to the phenylalanyl-tRNA synthetase beta subunit family. Type 1 subfamily. As to quaternary structure, tetramer of two alpha and two beta subunits. Mg(2+) is required as a cofactor.

Its subcellular location is the cytoplasm. It carries out the reaction tRNA(Phe) + L-phenylalanine + ATP = L-phenylalanyl-tRNA(Phe) + AMP + diphosphate + H(+). In Bacillus licheniformis (strain ATCC 14580 / DSM 13 / JCM 2505 / CCUG 7422 / NBRC 12200 / NCIMB 9375 / NCTC 10341 / NRRL NRS-1264 / Gibson 46), this protein is Phenylalanine--tRNA ligase beta subunit.